We begin with the raw amino-acid sequence, 147 residues long: MVHFTAEEKAIIMSLWGKVNIEEAGGEALGRLLVVYPWTQRFFETFGNLSSASAIMGNPKVKAHGKKVLTSFGEAVKNMDNLKGAFAKLSELHCDKLHVDPENFKLLGNVMVIILATHFGKEFTPDVQAAWQKLVSGVATALAHKYH.

The Globin domain maps to 3–147 (HFTAEEKAII…VATALAHKYH (145 aa)). Ser14 and Ser51 each carry phosphoserine. Heme b-binding residues include His64 and His93.

The protein belongs to the globin family. Heterotetramer of two alpha chains and two epsilon chains in early embryonic hemoglobin Gower-2; two zeta chains and two epsilon chains in early embryonic hemoglobin Gower-1. As to expression, red blood cells.

Its function is as follows. The epsilon chain is a beta-type chain of early mammalian embryonic hemoglobin. In Otolemur crassicaudatus (Brown greater galago), this protein is Hemoglobin subunit epsilon (HBE1).